Consider the following 327-residue polypeptide: DNA-directed RNA polymerase subunit alpha (327 aa).

The alpha N-terminal domain (alpha-NTD) stretch occupies residues 1 to 227; the sequence is MLIAHRPTLI…ELFGLARELN (227 aa). An alpha C-terminal domain (alpha-CTD) region spans residues 244–327; the sequence is SDEDLRIPIE…GSYFDPNYGS (84 aa).

Belongs to the RNA polymerase alpha chain family. As to quaternary structure, homodimer. The RNAP catalytic core consists of 2 alpha, 1 beta, 1 beta' and 1 omega subunit. When a sigma factor is associated with the core the holoenzyme is formed, which can initiate transcription.

The catalysed reaction is RNA(n) + a ribonucleoside 5'-triphosphate = RNA(n+1) + diphosphate. DNA-dependent RNA polymerase catalyzes the transcription of DNA into RNA using the four ribonucleoside triphosphates as substrates. In Tropheryma whipplei (strain TW08/27) (Whipple's bacillus), this protein is DNA-directed RNA polymerase subunit alpha.